Here is a 476-residue protein sequence, read N- to C-terminus: Glycogen synthase (476 aa).

Lys15 is a binding site for ADP-alpha-D-glucose.

It belongs to the glycosyltransferase 1 family. Bacterial/plant glycogen synthase subfamily.

It carries out the reaction [(1-&gt;4)-alpha-D-glucosyl](n) + ADP-alpha-D-glucose = [(1-&gt;4)-alpha-D-glucosyl](n+1) + ADP + H(+). It participates in glycan biosynthesis; glycogen biosynthesis. Functionally, synthesizes alpha-1,4-glucan chains using ADP-glucose. The chain is Glycogen synthase from Halalkalibacterium halodurans (strain ATCC BAA-125 / DSM 18197 / FERM 7344 / JCM 9153 / C-125) (Bacillus halodurans).